Here is a 320-residue protein sequence, read N- to C-terminus: Olfactory receptor 2C3 (320 aa).

Residues 1-26 (MMEIANVSSPEVFVLLGFSTRPSLET) lie on the Extracellular side of the membrane. A glycan (N-linked (GlcNAc...) asparagine) is linked at Asn6. Residues 27–50 (VLFIVVLSFYMVSILGNGIIILVS) form a helical membrane-spanning segment. At 51 to 58 (HTDVHLHT) the chain is on the cytoplasmic side. The chain crosses the membrane as a helical span at residues 59 to 80 (PMYFFLANLPFLDMSFTTSIVP). At 81-101 (QLLANLWGPQKTISYGGCVVQ) the chain is on the extracellular side. The cysteines at positions 98 and 190 are disulfide-linked. The chain crosses the membrane as a helical span at residues 102–121 (FYISHWLGATECVLLATMSY). At 122 to 140 (DRYAAICRPLHYTVIMHPQ) the chain is on the cytoplasmic side. The chain crosses the membrane as a helical span at residues 141–159 (LCLGLALASWLGGLTTSMV). The Extracellular segment spans residues 160-196 (GSTLTMLLPLCGNNCIDHFFCEMPLIMQLACVDTSLN). The helical transmembrane segment at 197 to 220 (EMEMYLASFVFVVLPLGLILVSYG) threads the bilayer. Residues 221 to 237 (HIARAVLKIRSAEGRRK) lie on the Cytoplasmic side of the membrane. A helical transmembrane segment spans residues 238 to 260 (AFNTCSSHVAVVSLFYGSIIFMY). The Extracellular segment spans residues 261–273 (LQPAKSTSHEQGK). A helical transmembrane segment spans residues 274–293 (FIALFYTVVTPALNPLIYTL). Topologically, residues 294–320 (RNTEVKSALRHMVLENCCGSAGKLAQI) are cytoplasmic.

Belongs to the G-protein coupled receptor 1 family.

The protein resides in the cell membrane. Functionally, odorant receptor. The chain is Olfactory receptor 2C3 (OR2C3) from Homo sapiens (Human).